The following is a 146-amino-acid chain: Transcriptional regulator MraZ (146 aa).

SpoVT-AbrB domains are found at residues 4 to 46 (SYEK…SKKS) and 75 to 118 (TIEV…SKEK).

Belongs to the MraZ family. Forms oligomers.

The protein localises to the cytoplasm. The protein resides in the nucleoid. The polypeptide is Transcriptional regulator MraZ (Mycoplasma mobile (strain ATCC 43663 / 163K / NCTC 11711) (Mesomycoplasma mobile)).